The chain runs to 421 residues: Protein PHLOEM UNLOADING MODULATOR (421 aa).

The next 7 membrane-spanning stretches (helical) occupy residues 30–50 (LMPVLWSVLAIAVVTRVLFYK), 60–80 (IPFLGSIVFLLCALLFEALCV), 124–144 (HIIGLHHFLMLFIMLGFSVVF), 158–178 (YIFTMGVGRLLRAITFVSTIL), 286–306 (AMAWTEAYGGFSSAMIWLFVA), 323–343 (CIVAIYVGILLWKMTGFIWSA), and 397–417 (TVFACATVITTLTIVILALTL).

It belongs to the sphingomyelin synthase family.

The protein localises to the membrane. The protein operates within sphingolipid metabolism. Its function is as follows. Catalyzes the biosynthesis of sphingolipids with very long-chain fatty acid (VLCFA). Required for the formation of plasmodesmal cytoplasmic sleeve during the transition from type I to type II plasmodesmata to modulate post-sieve elements (SE) unloading and symplastic cell-to-cell molecular trafficking at the phloem pole pericycle (PPP)-endodermis interface in roots. The protein is Protein PHLOEM UNLOADING MODULATOR of Arabidopsis thaliana (Mouse-ear cress).